A 1421-amino-acid chain; its full sequence is Cytoadherence-linked asexual protein 3.2 (1421 aa).

The first 24 residues, 1 to 24, serve as a signal peptide directing secretion; sequence MVSFFKTPIIIFFFLLCLNEKVLC. Cystine bridges form between Cys335/Cys363, Cys409/Cys415, Cys519/Cys547, and Cys523/Cys544. A helical membrane pass occupies residues 1203–1223; it reads NFFMELANGFMYAFCFFAISQ. A disulfide bond links Cys1352 and Cys1355. Residues 1371–1413 form a disordered region; that stretch reads GDKNTNETTEIKKQTSTYIDTEKMNEADSADSDDEKDFDTPDN. The span at 1398 to 1412 shows a compositional bias: acidic residues; that stretch reads DSADSDDEKDFDTPD.

Component of the RhopH complex. RhopH complex is at least composed of CLAG3.1/CLAG3.2, RhopH2 and RhopH3 with a 1:1:1 subunit stoichiometry. CLAG3.1/CLAG3.2 mediates subunit association through independent contacts with RhopH2 and RhopH3, which do not directly interact with one another. Interacts with RhopH2. Interacts with RhopH3.

It localises to the host cell membrane. The protein resides in the parasitophorous vacuole membrane. Its subcellular location is the host cytoplasm. The protein localises to the cytoplasmic vesicle. It is found in the secretory vesicle. It localises to the rhoptry. In terms of biological role, participates in the formation of new permeability pathways in Plasmodium-infected erythrocytes enabling the uptake of nutrients from the blood plasma. This Plasmodium falciparum protein is Cytoadherence-linked asexual protein 3.2.